The primary structure comprises 92 residues: Small ribosomal subunit protein uS19 (92 aa).

This sequence belongs to the universal ribosomal protein uS19 family.

Functionally, protein S19 forms a complex with S13 that binds strongly to the 16S ribosomal RNA. This chain is Small ribosomal subunit protein uS19, found in Bacillus thuringiensis subsp. konkukian (strain 97-27).